A 725-amino-acid polypeptide reads, in one-letter code: Peroxisomal fatty acid beta-oxidation multifunctional protein MFP2 (725 aa).

Glu119 serves as the catalytic Nucleophile. The Proton acceptor role is filled by Glu139. The Microbody targeting signal signature appears at 723–725 (SRL).

In the N-terminal section; belongs to the enoyl-CoA hydratase/isomerase family. It in the central section; belongs to the 3-hydroxyacyl-CoA dehydrogenase family. Highly expressed in senescing leaves and at lower levels in flowers and siliques.

It localises to the glyoxysome. The protein resides in the peroxisome. It catalyses the reaction a (3S)-3-hydroxyacyl-CoA = a (2E)-enoyl-CoA + H2O. It carries out the reaction a 4-saturated-(3S)-3-hydroxyacyl-CoA = a (3E)-enoyl-CoA + H2O. The catalysed reaction is (3S)-3-hydroxybutanoyl-CoA = (2E)-butenoyl-CoA + H2O. The enzyme catalyses (3S)-hydroxyoctanoyl-CoA = (2E)-octenoyl-CoA + H2O. It catalyses the reaction (3S)-3-hydroxydodecanoyl-CoA = (2E)-dodecenoyl-CoA + H2O. It carries out the reaction (3S)-hydroxytetradecanoyl-CoA = (2E)-tetradecenoyl-CoA + H2O. The catalysed reaction is (3S)-hydroxyhexanoyl-CoA = (2E)-hexenoyl-CoA + H2O. The enzyme catalyses a (3Z)-enoyl-CoA = a 4-saturated (2E)-enoyl-CoA. It catalyses the reaction a (3E)-enoyl-CoA = a 4-saturated (2E)-enoyl-CoA. It carries out the reaction (3S)-3-hydroxybutanoyl-CoA = (3R)-3-hydroxybutanoyl-CoA. The catalysed reaction is a (3S)-3-hydroxyacyl-CoA + NAD(+) = a 3-oxoacyl-CoA + NADH + H(+). The enzyme catalyses (3S)-3-hydroxybutanoyl-CoA + NAD(+) = acetoacetyl-CoA + NADH + H(+). It catalyses the reaction (3S)-hydroxyhexanoyl-CoA + NAD(+) = 3-oxohexanoyl-CoA + NADH + H(+). It carries out the reaction (3S)-hydroxyoctanoyl-CoA + NAD(+) = 3-oxooctanoyl-CoA + NADH + H(+). The catalysed reaction is (3S)-3-hydroxydodecanoyl-CoA + NAD(+) = 3-oxododecanoyl-CoA + NADH + H(+). The enzyme catalyses (3S)-hydroxytetradecanoyl-CoA + NAD(+) = 3-oxotetradecanoyl-CoA + NADH + H(+). It functions in the pathway lipid metabolism; fatty acid beta-oxidation. In terms of biological role, involved in peroxisomal fatty acid beta-oxidation during seed germination. Possesses enoyl-CoA hydratase activity against long chain substrates (C14-C18) and 3-hydroxyacyl-CoA dehydrogenase activity against chains of variable sizes (C6-C18). Possesses 3-hydroxy-3-phenylpropionyl-CoA dehydrogenase activity and is involved in the peroxisomal beta-oxidation pathway for the biosynthesis of benzoic acid (BA). Required for the accumulation in seeds of substituted hydroxybenzoylated choline esters, which are BA-containing secondary metabolites. Fatty acid beta-oxidation pathway in peroxisomes regulates gene silencing, histone acetylation and DNA methylation. In Arabidopsis thaliana (Mouse-ear cress), this protein is Peroxisomal fatty acid beta-oxidation multifunctional protein MFP2.